Here is a 176-residue protein sequence, read N- to C-terminus: ADP-ribosylation factor-like protein 8d (176 aa).

Residues 21-26, 40-43, 62-66, and 121-124 each bind GTP; these read NSGKTS, MIPT, DLGGQ, and NKID.

It belongs to the small GTPase superfamily. Arf family. In terms of assembly, interacts with tubulin.

The protein resides in the late endosome membrane. It localises to the lysosome membrane. The protein localises to the cytoplasm. It is found in the cytoskeleton. Its subcellular location is the spindle. Functionally, may play a role in lysosome motility. May play a role in chromosome segregation. The protein is ADP-ribosylation factor-like protein 8d of Arabidopsis thaliana (Mouse-ear cress).